A 387-amino-acid chain; its full sequence is Involucrin (387 aa).

Disordered stretches follow at residues 1-319 (MSQQ…VHLG) and 347-387 (VCIP…LKQE). The segment covering 28–37 (NTQQDQMKQP) has biased composition (polar residues). Low complexity predominate over residues 62–71 (QVPEQECEPQ). Basic and acidic residues-rich tracts occupy residues 85–96 (KQQEPQEQEVHP), 104–115 (QEQEAHLGKKQE), 147–179 (QEVHLEKQLQEPQEVHLEKQLQEQEVHLEKQLQ), and 231–245 (QLEKQQEAQEQELHL).

It belongs to the involucrin family. Directly or indirectly cross-linked to cornifelin (CNFN). Substrate of transglutaminase. Specific glutamines or lysines are cross-linked to keratins, desmoplakin and to inter involucrin molecules. In terms of tissue distribution, keratinocytes of epidermis and other stratified squamous epithelia.

The protein localises to the cytoplasm. Part of the insoluble cornified cell envelope (CE) of stratified squamous epithelia. The protein is Involucrin (IVL) of Cephalopachus bancanus (Western tarsier).